The primary structure comprises 164 residues: HTH-type transcriptional regulator IscR (164 aa).

The HTH rrf2-type domain maps to 2 to 131 (RLTSKGRYAV…NNITLAELVN (130 aa)). The segment at residues 28–51 (LADISERQGISLSYLEQLFSRLRK) is a DNA-binding region (H-T-H motif). Positions 92, 98, and 104 each coordinate [2Fe-2S] cluster. A metal cation-binding residues include cysteine 92, cysteine 98, and cysteine 104. Residues 145 to 164 (DTRRTANGRPQETINVNLRA) form a disordered region. Residues 152–164 (GRPQETINVNLRA) are compositionally biased toward polar residues.

Requires [2Fe-2S] cluster as cofactor.

Its function is as follows. Regulates the transcription of several operons and genes involved in the biogenesis of Fe-S clusters and Fe-S-containing proteins. The protein is HTH-type transcriptional regulator IscR of Serratia proteamaculans (strain 568).